We begin with the raw amino-acid sequence, 253 residues long: MRLTVELIQNSLSYINPLKDRELDLRGHKIPTIENLGIAKDQDAIDFTDNDISSLGNFPFFPRLHTLLLARNRVKHIQPTIASTIPNLTTLVLTANNMAELADLDPLRNLTRLTHLVLLENPVTRKEHYRYWVIWRIPSVRFLDYQKVKDAERAKAKELFGTAEEPTALASKIMGIKSRTFDVPSGGAERAPADKAVRVKLTEKERKRVEKMIREARSLQEITRLEKELNEGRIPGGALDAGEDSEDENQMQT.

4 LRR repeats span residues Lys19–Lys40, Asp41–Pro62, Arg63–Thr84, and Asn87–Arg108. In terms of domain architecture, LRRCT spans Asn121–Leu159. A disordered region spans residues Glu228–Thr253. Over residues Ala241–Thr253 the composition is skewed to acidic residues.

This sequence belongs to the U2 small nuclear ribonucleoprotein A family. As to quaternary structure, associated with the spliceosome.

It is found in the nucleus. In terms of biological role, involved in pre-mRNA splicing. The sequence is that of U2 small nuclear ribonucleoprotein A' (lea1) from Aspergillus fumigatus (strain ATCC MYA-4609 / CBS 101355 / FGSC A1100 / Af293) (Neosartorya fumigata).